We begin with the raw amino-acid sequence, 314 residues long: Ribosomal protein L11 methyltransferase (314 aa).

4 residues coordinate S-adenosyl-L-methionine: T161, G182, D204, and N248.

This sequence belongs to the methyltransferase superfamily. PrmA family.

The protein resides in the cytoplasm. The enzyme catalyses L-lysyl-[protein] + 3 S-adenosyl-L-methionine = N(6),N(6),N(6)-trimethyl-L-lysyl-[protein] + 3 S-adenosyl-L-homocysteine + 3 H(+). Methylates ribosomal protein L11. This chain is Ribosomal protein L11 methyltransferase, found in Listeria innocua serovar 6a (strain ATCC BAA-680 / CLIP 11262).